Consider the following 548-residue polypeptide: Membrane protein insertase YidC (548 aa).

Residues N6 to D26 form a helical membrane-spanning segment. Positions N28–S55 are disordered. Low complexity predominate over residues Q30 to Q50. The next 4 helical transmembrane spans lie at F350–Y370, L420–L440, L458–I478, and P499–V519.

It belongs to the OXA1/ALB3/YidC family. Type 1 subfamily. As to quaternary structure, interacts with the Sec translocase complex via SecD. Specifically interacts with transmembrane segments of nascent integral membrane proteins during membrane integration.

It localises to the cell inner membrane. Required for the insertion and/or proper folding and/or complex formation of integral membrane proteins into the membrane. Involved in integration of membrane proteins that insert both dependently and independently of the Sec translocase complex, as well as at least some lipoproteins. Aids folding of multispanning membrane proteins. The polypeptide is Membrane protein insertase YidC (Shigella flexneri).